Reading from the N-terminus, the 87-residue chain is Large ribosomal subunit protein bL31B (87 aa).

This sequence belongs to the bacterial ribosomal protein bL31 family. Type B subfamily. Part of the 50S ribosomal subunit.

In Burkholderia thailandensis (strain ATCC 700388 / DSM 13276 / CCUG 48851 / CIP 106301 / E264), this protein is Large ribosomal subunit protein bL31B.